The chain runs to 246 residues: ATP synthase subunit a, chloroplastic (246 aa).

Helical transmembrane passes span 35–55 (GQVL…GLIA), 94–114 (VPFI…GALL), 132–152 (DINT…YAGI), 198–218 (LVVG…VMLL), and 219–239 (GVFT…AYIG).

It belongs to the ATPase A chain family. F-type ATPases have 2 components, CF(1) - the catalytic core - and CF(0) - the membrane proton channel. CF(1) has five subunits: alpha(3), beta(3), gamma(1), delta(1), epsilon(1). CF(0) has four main subunits: a, b, b' and c.

The protein localises to the plastid. Its subcellular location is the chloroplast thylakoid membrane. Functionally, key component of the proton channel; it plays a direct role in the translocation of protons across the membrane. This is ATP synthase subunit a, chloroplastic from Stigeoclonium helveticum (Green alga).